The following is a 523-amino-acid chain: Ribonuclease Y (523 aa).

Residues 18-38 (WSLTVALVIGGALGFLVVWAF) traverse the membrane as a helical segment. Positions 213–276 (TSTIVSLPNE…EVARGALEAL (64 aa)) constitute a KH domain. Residues 339-432 (VLDHSVETAS…VILADTISAT (94 aa)) enclose the HD domain.

Belongs to the RNase Y family.

The protein localises to the cell membrane. Endoribonuclease that initiates mRNA decay. This is Ribonuclease Y from Opitutus terrae (strain DSM 11246 / JCM 15787 / PB90-1).